Here is a 356-residue protein sequence, read N- to C-terminus: 3-isopropylmalate dehydrogenase (356 aa).

Substrate is bound by residues Arg95, Arg105, Arg133, and Asp223. Mg(2+) contacts are provided by Asp223, Asp247, and Asp251. Gly281 to Asn293 is a binding site for NAD(+).

It belongs to the isocitrate and isopropylmalate dehydrogenases family. LeuB type 1 subfamily. As to quaternary structure, homodimer. The cofactor is Mg(2+). Mn(2+) is required as a cofactor.

It is found in the cytoplasm. The enzyme catalyses (2R,3S)-3-isopropylmalate + NAD(+) = 4-methyl-2-oxopentanoate + CO2 + NADH. The protein operates within amino-acid biosynthesis; L-leucine biosynthesis; L-leucine from 3-methyl-2-oxobutanoate: step 3/4. Functionally, catalyzes the oxidation of 3-carboxy-2-hydroxy-4-methylpentanoate (3-isopropylmalate) to 3-carboxy-4-methyl-2-oxopentanoate. The product decarboxylates to 4-methyl-2 oxopentanoate. In Neisseria meningitidis serogroup B (strain ATCC BAA-335 / MC58), this protein is 3-isopropylmalate dehydrogenase.